Here is a 623-residue protein sequence, read N- to C-terminus: V-type proton ATPase catalytic subunit A (623 aa).

An ATP-binding site is contributed by 252-259; the sequence is GAFGCGKT.

This sequence belongs to the ATPase alpha/beta chains family. V-ATPase is a heteromultimeric enzyme composed of a peripheral catalytic V1 complex (main components: subunits A, B, C, D, E, and F) attached to an integral membrane V0 proton pore complex (main component: the proteolipid protein).

The enzyme catalyses ATP + H2O + 4 H(+)(in) = ADP + phosphate + 5 H(+)(out). Its function is as follows. Catalytic subunit of the peripheral V1 complex of vacuolar ATPase. V-ATPase vacuolar ATPase is responsible for acidifying a variety of intracellular compartments in eukaryotic cells. This Daucus carota (Wild carrot) protein is V-type proton ATPase catalytic subunit A.